Reading from the N-terminus, the 93-residue chain is Alpha-defensin 26 (93 aa).

An N-terminal signal peptide occupies residues 1-19 (MKTLVLLSALFLLAFQVQA). Positions 20–58 (DPIQNTDEETNTEVQPQEEDQAVSVSFGNPEGSDLQEES) are excised as a propeptide. The interval 24 to 55 (NTDEETNTEVQPQEEDQAVSVSFGNPEGSDLQ) is disordered. The span at 25–40 (TDEETNTEVQPQEEDQ) shows a compositional bias: acidic residues. 3 disulfide bridges follow: C64–C92, C66–C81, and C71–C91.

This sequence belongs to the alpha-defensin family.

The protein resides in the secreted. May have microbicidal activities. The chain is Alpha-defensin 26 (Defa26) from Mus musculus (Mouse).